Here is a 507-residue protein sequence, read N- to C-terminus: Probable bifunctional methylthioribulose-1-phosphate dehydratase/enolase-phosphatase E1 (507 aa).

Ala2 carries the post-translational modification N-acetylalanine. A methylthioribulose-1-phosphate dehydratase region spans residues 2–237 (AVAAAAMIGL…AIKLHQLGLD (236 aa)). Cys109 provides a ligand contact to substrate. Residues His127 and His129 each coordinate Zn(2+). Residue Glu152 is the Proton donor/acceptor of the active site. Residue His202 participates in Zn(2+) binding. The enolase-phosphatase E1 stretch occupies residues 268 to 507 (IVLDIEGTTT…FKTVTSFSQI (240 aa)). Asp271 and Glu273 together coordinate Mg(2+). Substrate-binding positions include 406–407 (SS) and Lys440. Asp466 serves as a coordination point for Mg(2+).

This sequence in the N-terminal section; belongs to the aldolase class II family. MtnB subfamily. It in the C-terminal section; belongs to the HAD-like hydrolase superfamily. MasA/MtnC family. It depends on Zn(2+) as a cofactor. Requires Mg(2+) as cofactor.

The enzyme catalyses 5-(methylsulfanyl)-D-ribulose 1-phosphate = 5-methylsulfanyl-2,3-dioxopentyl phosphate + H2O. The catalysed reaction is 5-methylsulfanyl-2,3-dioxopentyl phosphate + H2O = 1,2-dihydroxy-5-(methylsulfanyl)pent-1-en-3-one + phosphate. It participates in amino-acid biosynthesis; L-methionine biosynthesis via salvage pathway; L-methionine from S-methyl-5-thio-alpha-D-ribose 1-phosphate: step 2/6. The protein operates within amino-acid biosynthesis; L-methionine biosynthesis via salvage pathway; L-methionine from S-methyl-5-thio-alpha-D-ribose 1-phosphate: step 3/6. Its pathway is amino-acid biosynthesis; L-methionine biosynthesis via salvage pathway; L-methionine from S-methyl-5-thio-alpha-D-ribose 1-phosphate: step 4/6. The protein is Probable bifunctional methylthioribulose-1-phosphate dehydratase/enolase-phosphatase E1 of Arabidopsis thaliana (Mouse-ear cress).